An 896-amino-acid polypeptide reads, in one-letter code: Sodium/hydrogen exchanger 5 (896 aa).

The Cytoplasmic segment spans residues 1-45 (MLRAALSLLALPLAGAAEEPTQKPESPGEPPPGLELFRWQWHEVE). Residues 46–66 (APYLVALWILVASLAKIVFHL) traverse the membrane as a helical segment. The Extracellular portion of the chain corresponds to 67–73 (SRKVTSL). A helical transmembrane segment spans residues 74 to 94 (VPESCLLILLGLVLGGIVLAV). Over 95-103 (AKKAEYQLE) the chain is Cytoplasmic. The helical transmembrane segment at 104–124 (PGTFFLFLLPPIVLDSGYFMP) threads the bilayer. At 125–134 (SRLFFDNLGA) the chain is on the extracellular side. The chain crosses the membrane as a helical span at residues 135 to 155 (ILTYAVVGTLWNAFTTGAALW). Topologically, residues 156-173 (GLQQAGLVAPRVQAGLLD) are cytoplasmic. A helical membrane pass occupies residues 174–194 (FLLFGSLISAVDPVAVLAVFE). At 195-200 (EVHVNE) the chain is on the extracellular side. N-linked (GlcNAc...) asparagine glycosylation occurs at Asn-199. A helical membrane pass occupies residues 201–221 (TLFIIVFGESLLNDAVTVVLY). Over 222 to 246 (KVCNSFVEMGSANVQATDYLKGVAS) the chain is Cytoplasmic. Residues 247–267 (LFVVSLGGAAVGLVFAFLLAL) form a helical membrane-spanning segment. Over 268–276 (TTRFTKRVR) the chain is Extracellular. A helical transmembrane segment spans residues 277–297 (IIEPLLVFLLAYAAYLTAEMA). Residues 298 to 331 (SLSAILAVTMCGLGCKKYVEANISHKSRTTVKYT) are Cytoplasmic-facing. A helical transmembrane segment spans residues 332 to 352 (MKTLASCAETVIFMLLGISAV). At 353–360 (DSSKWAWD) the chain is on the extracellular side. The helical transmembrane segment at 361-381 (SGLVLGTLIFILFFRALGVVL) threads the bilayer. At 382-398 (QTWVLNQFRLVPLDKID) the chain is on the cytoplasmic side. A helical membrane pass occupies residues 399–419 (QVVMSYGGLRGAVAFALVILL). The Extracellular segment spans residues 420 to 428 (DRTKVPAKD). The chain crosses the membrane as a helical span at residues 429–449 (YFVATTIVVVFFTVIVQGLTI). The Cytoplasmic portion of the chain corresponds to 450 to 896 (KPLVKWLKVK…CIQFNRGSRL (447 aa)). A required for interaction with ARRB2 region spans residues 576 to 721 (GSGACLDLQV…SETEKEDDEG (146 aa)). Disordered stretches follow at residues 658 to 686 (TKSK…GKHR), 701 to 720 (ESEE…EDDE), and 818 to 864 (HPRG…QQQE). Residues 660-672 (SKPRPRKTGRRKK) show a composition bias toward basic residues. Positions 854–864 (ESSADLPQQQE) are enriched in polar residues.

It belongs to the monovalent cation:proton antiporter 1 (CPA1) transporter (TC 2.A.36) family. Interacts with CHP1 and CHP2. Interacts with ARRB2; facilitates the endocytosis of SLC9A5 from the plasma membrane. Interacts with RACK1; this interaction positively regulates SLC9A5 activity and promotes SLC9A5 localization to focal adhesions. Interacts with SCAMP2; this interaction regulates SLC9A5 cell-surface targeting and SLC9A5 activity. Phosphorylated by PRKAA2; promotes its accumulation at the cell surface. Phosphorylated by CSNK2A1 in a manner favoring its beta-arrestin binding and endocytosis. Mainly expressed in brain. Expressed in neurons of the central and peripheral nervous system. Expressed also in testis, spleen, and skeletal muscle.

It localises to the cell membrane. The protein resides in the recycling endosome membrane. Its subcellular location is the cell projection. It is found in the dendritic spine membrane. The protein localises to the synaptic cell membrane. It localises to the cell junction. The protein resides in the focal adhesion. The catalysed reaction is Na(+)(in) + H(+)(out) = Na(+)(out) + H(+)(in). With respect to regulation, ATP-depletion almost completely abolishes SLC9A5 activity. Inhibited by amiloride compounds. Its function is as follows. Plasma membrane Na(+)/H(+) antiporter. Mediates the electroneutral exchange of intracellular H(+) ions for extracellular Na(+) in 1:1 stoichiometry, thus regulating intracellular pH homeostasis, in particular in neural tissues. Acts as a negative regulator of dendritic spine growth. Plays a role in postsynaptic remodeling and signaling. Can also contribute to organellar pH regulation, with consequences for receptor tyrosine kinase trafficking. The chain is Sodium/hydrogen exchanger 5 from Homo sapiens (Human).